Reading from the N-terminus, the 386-residue chain is Histone-lysine N-methyltransferase SETD7 (386 aa).

The span at 1 to 12 (MDSSDDEIACDE) shows a compositional bias: acidic residues. Residues 1–21 (MDSSDDEIACDEGDYKGAKDD) are disordered. MORN repeat units lie at residues 15–38 (YKGAKDDNDLPHGLGKVKFSSGDE), 39–61 (FIGAFEHGIKCGPGKFHFFDDST), 62–84 (LEGNYVDGELHGIGIYTNDDGSI), and 109–131 (FRGQYSEGVRCGLCFYYFPDGGS). The SET domain occupies 222–344 (ELVYAAPSKI…EGDELTVHYT (123 aa)). Residues 234–236 (AGE), Asn304, and His305 contribute to the S-adenosyl-L-methionine site.

Belongs to the class V-like SAM-binding methyltransferase superfamily. Histone-lysine methyltransferase family. SET7 subfamily.

Its subcellular location is the nucleus. The protein resides in the chromosome. It catalyses the reaction L-lysyl(4)-[histone H3] + S-adenosyl-L-methionine = N(6)-methyl-L-lysyl(4)-[histone H3] + S-adenosyl-L-homocysteine + H(+). The enzyme catalyses L-lysyl-[protein] + S-adenosyl-L-methionine = N(6)-methyl-L-lysyl-[protein] + S-adenosyl-L-homocysteine + H(+). Its function is as follows. Histone methyltransferase that specifically monomethylates 'Lys-4' of histone H3. H3 'Lys-4' methylation represents a specific tag for epigenetic transcriptional activation. Plays a central role in the transcriptional activation of genes. Also has methyltransferase activity toward non-histone proteins. The sequence is that of Histone-lysine N-methyltransferase SETD7 (setd7) from Halocynthia roretzi (Sea squirt).